Consider the following 1440-residue polypeptide: Genome polyprotein (1440 aa).

The propeptide at 32–53 (GGNEGSIMWLASLAVVIACAGA) is ER anchor for the capsid protein C, removed in mature form by serine protease NS3. A helical membrane pass occupies residues 36–56 (GSIMWLASLAVVIACAGAMKL). Topologically, residues 57-180 (SNFQGKLLMT…ATRYLMKTEN (124 aa)) are extracellular. Asn68 carries an N-linked (GlcNAc...) asparagine; by host glycan. A helical transmembrane segment spans residues 181–201 (WIVRNPGYAFLAAILGWMLGS). The Cytoplasmic segment spans residues 202-207 (NNGQRR). Residues 208–222 (WYFTILLLLVAPAYS) traverse the membrane as a helical segment. The Extracellular segment spans residues 223-674 (FNCLGMGNRD…QVFGGAFRTL (452 aa)). 6 cysteine pairs are disulfide-bonded: Cys225–Cys252, Cys282–Cys338, Cys282–Cys343, Cys296–Cys327, Cys314–Cys338, and Cys314–Cys343. The segment at 320-333 (DRGWGNGCGLFGKG) is fusion peptide. An N-linked (GlcNAc...) asparagine; by host glycan is attached at Asn376. Cystine bridges form between Cys412-Cys509 and Cys526-Cys557. A helical membrane pass occupies residues 675 to 695 (FGGMSWITQGLMGALLLWMGV). Over 696-701 (NARDRS) the chain is Cytoplasmic. The chain crosses the membrane as a helical span at residues 702–722 (IALAFLATGGVLVFLATNVHA). The Extracellular segment spans residues 723-1147 (DTGCAIDITR…AFAEANSGGD (425 aa)). 6 disulfide bridges follow: Cys726–Cys737, Cys777–Cys865, Cys901–Cys945, Cys1002–Cys1051, Cys1013–Cys1034, and Cys1035–Cys1038. Residues Asn852 and Asn929 are each glycosylated (N-linked (GlcNAc...) asparagine; by host). The chain crosses the membrane as a helical span at residues 1148–1168 (VLHLALIAVFKIQPAFLVMNM). The Cytoplasmic segment spans residues 1169–1178 (LSTRWTNQEN). A helical transmembrane segment spans residues 1179-1199 (VVLVLGAAFFHLASVDLQIGV). His1200 is a topological domain (lumenal). A helical membrane pass occupies residues 1201–1221 (GILNAAAIAWMIVRAITFPTT). Topologically, residues 1222–1237 (SSVTMPVLALLTPGMR) are cytoplasmic. Residues 1238–1258 (ALYLDTYRIILLVIGICSLLQ) traverse the membrane as a helical segment. Residues 1259 to 1269 (ERKKTMAKKKG) are Lumenal-facing. Residues 1270–1290 (AVLLGLALTSTGWFSPTTIAA) traverse the membrane as a helical segment. The Cytoplasmic segment spans residues 1291–1302 (GLMVCNPNKKRG). The helical transmembrane segment at 1303 to 1323 (WPATEFLSAVGLMFAIVGGLA) threads the bilayer. Residues 1324 to 1326 (ELD) lie on the Lumenal side of the membrane. A helical membrane pass occupies residues 1327-1347 (IESMSIPFMLAGLMAVSYVVS). Residues 1348 to 1404 (GKATDMWLERAADISWEMDAAITGSSRRLDVKLDDDGDFHLIDDPGVPWKVWVLRMS) are Cytoplasmic-facing. Residues 1355–1394 (LERAADISWEMDAAITGSSRRLDVKLDDDGDFHLIDDPGV) are interacts with and activates NS3 protease. Residues 1405–1425 (CIGLAALTPWAIVPAAFGYWL) constitute an intramembrane region (helical). Over 1426 to 1440 (TLKTTKRGGVFWDTP) the chain is Cytoplasmic.

As to quaternary structure, homodimer. Interacts (via N-terminus) with host EXOC1 (via C-terminus); this interaction results in EXOC1 degradation through the proteasome degradation pathway. In terms of assembly, forms heterodimers with envelope protein E in the endoplasmic reticulum and Golgi. Homodimer; in the endoplasmic reticulum and Golgi. Interacts with protein prM. Interacts with non-structural protein 1. As to quaternary structure, homodimer; Homohexamer when secreted. Interacts with envelope protein E. NS1 interacts with NS4B. Interacts with host complement protein CFH; this interaction leads to the degradation of C3. In terms of assembly, interacts (via N-terminus) with serine protease NS3. Forms a heterodimer with serine protease NS3. May form homooligomers. As to quaternary structure, forms a heterodimer with NS2B. Interacts with non-structural protein 2A (via N-terminus). Interacts with NS4B. Interacts with unphosphorylated RNA-directed RNA polymerase NS5; this interaction stimulates RNA-directed RNA polymerase NS5 guanylyltransferase activity. The cofactor is Mn(2+). Mg(2+) is required as a cofactor. Specific enzymatic cleavages in vivo yield mature proteins. Cleavages in the lumen of endoplasmic reticulum are performed by host signal peptidase, whereas cleavages in the cytoplasmic side are performed by serine protease NS3. Signal cleavage at the 2K-4B site requires a prior NS3 protease-mediated cleavage at the 4A-2K site. In terms of processing, cleaved in post-Golgi vesicles by a host furin, releasing the mature small envelope protein M, and peptide pr. This cleavage is incomplete as up to 30% of viral particles still carry uncleaved prM. Post-translationally, N-glycosylated. N-glycosylated. The excreted form is glycosylated and this is required for efficient secretion of the protein from infected cells. In terms of processing, RNA-directed RNA polymerase NS5: Phosphorylated on serines residues. This phosphorylation may trigger NS5 nuclear localization.

The protein resides in the virion. It is found in the host nucleus. Its subcellular location is the host cytoplasm. It localises to the host perinuclear region. The protein localises to the secreted. The protein resides in the virion membrane. It is found in the host endoplasmic reticulum membrane. The enzyme catalyses Selective hydrolysis of -Xaa-Xaa-|-Yaa- bonds in which each of the Xaa can be either Arg or Lys and Yaa can be either Ser or Ala.. It carries out the reaction a ribonucleoside 5'-triphosphate + H2O = a ribonucleoside 5'-diphosphate + phosphate + H(+). The catalysed reaction is ATP + H2O = ADP + phosphate + H(+). Functionally, plays a role in virus budding by binding to the cell membrane and gathering the viral RNA into a nucleocapsid that forms the core of a mature virus particle. During virus entry, may induce genome penetration into the host cytoplasm after hemifusion induced by the surface proteins. Can migrate to the cell nucleus where it modulates host functions. Overcomes the anti-viral effects of host EXOC1 by sequestering and degrading the latter through the proteasome degradation pathway. In terms of biological role, inhibits RNA silencing by interfering with host Dicer. Prevents premature fusion activity of envelope proteins in trans-Golgi by binding to envelope protein E at pH 6.0. After virion release in extracellular space, gets dissociated from E dimers. Its function is as follows. Acts as a chaperone for envelope protein E during intracellular virion assembly by masking and inactivating envelope protein E fusion peptide. prM is the only viral peptide matured by host furin in the trans-Golgi network probably to avoid catastrophic activation of the viral fusion activity in acidic Golgi compartment prior to virion release. prM-E cleavage is inefficient, and many virions are only partially matured. These uncleaved prM would play a role in immune evasion. Functionally, may play a role in virus budding. Exerts cytotoxic effects by activating a mitochondrial apoptotic pathway through M ectodomain. May display a viroporin activity. In terms of biological role, binds to host cell surface receptor and mediates fusion between viral and cellular membranes. Envelope protein is synthesized in the endoplasmic reticulum in the form of heterodimer with protein prM. They play a role in virion budding in the ER, and the newly formed immature particle is covered with 60 spikes composed of heterodimer between precursor prM and envelope protein E. The virion is transported to the Golgi apparatus where the low pH causes dissociation of PrM-E heterodimers and formation of E homodimers. prM-E cleavage is inefficient, and many virions are only partially matured. These uncleaved prM would play a role in immune evasion. Involved in immune evasion, pathogenesis and viral replication. Once cleaved off the polyprotein, is targeted to three destinations: the viral replication cycle, the plasma membrane and the extracellular compartment. Essential for viral replication. Required for formation of the replication complex and recruitment of other non-structural proteins to the ER-derived membrane structures. Excreted as a hexameric lipoparticle that plays a role against host immune response. Antagonizing the complement function. Binds to the host macrophages and dendritic cells. Inhibits signal transduction originating from Toll-like receptor 3 (TLR3). Its function is as follows. Component of the viral RNA replication complex that functions in virion assembly and antagonizes the host alpha/beta interferon antiviral response. Functionally, required cofactor for the serine protease function of NS3. May have membrane-destabilizing activity and form viroporins. In terms of biological role, displays three enzymatic activities: serine protease, NTPase and RNA helicase. NS3 serine protease, in association with NS2B, performs its autocleavage and cleaves the polyprotein at dibasic sites in the cytoplasm: C-prM, NS2A-NS2B, NS2B-NS3, NS3-NS4A, NS4A-2K and NS4B-NS5. NS3 RNA helicase binds RNA and unwinds dsRNA in the 3' to 5' direction. Non-structural protein 4A: Regulates the ATPase activity of the NS3 helicase activity. NS4A allows NS3 helicase to conserve energy during unwinding. Its function is as follows. Peptide 2k: Functions as a signal peptide for NS4B and is required for the interferon antagonism activity of the latter. Functionally, non-structural protein 4B: Induces the formation of ER-derived membrane vesicles where the viral replication takes place. Inhibits interferon (IFN)-induced host STAT1 phosphorylation and nuclear translocation, thereby preventing the establishment of cellular antiviral state by blocking the IFN-alpha/beta pathway. Inhibits STAT2 translocation in the nucleus after IFN-alpha treatment. In terms of biological role, RNA-directed RNA polymerase NS5: Replicates the viral (+) and (-) RNA genome. Performs the capping of genomes in the cytoplasm. NS5 methylates viral RNA cap at guanine N-7 and ribose 2'-O positions. Besides its role in RNA genome replication, also prevents the establishment of cellular antiviral state by blocking the interferon-alpha/beta (IFN-alpha/beta) signaling pathway. Inhibits host TYK2 and STAT2 phosphorylation, thereby preventing activation of JAK-STAT signaling pathway. The sequence is that of Genome polyprotein from Japanese encephalitis virus (strain Nakayama) (JEV).